The chain runs to 460 residues: Argininosuccinate lyase (460 aa).

It belongs to the lyase 1 family. Argininosuccinate lyase subfamily.

The protein resides in the cytoplasm. It catalyses the reaction 2-(N(omega)-L-arginino)succinate = fumarate + L-arginine. The protein operates within amino-acid biosynthesis; L-arginine biosynthesis; L-arginine from L-ornithine and carbamoyl phosphate: step 3/3. This Campylobacter hominis (strain ATCC BAA-381 / DSM 21671 / CCUG 45161 / LMG 19568 / NCTC 13146 / CH001A) protein is Argininosuccinate lyase.